A 333-amino-acid chain; its full sequence is 2-oxoglutarate-dependent dioxygenase ucsF (333 aa).

The region spanning 174-296 (NASELRLNHY…RYSIAYLCKA (123 aa)) is the Fe2OG dioxygenase domain. Residues H202, D204, and H264 each contribute to the Fe cation site. R287 provides a ligand contact to 2-oxoglutarate.

It belongs to the iron/ascorbate-dependent oxidoreductase family. Fe(2+) is required as a cofactor.

It functions in the pathway mycotoxin biosynthesis. Functionally, 2-oxoglutarate-dependent dioxygenase; part of the gene cluster that mediates the biosynthesis of UCS1025A, a member of the pyrrolizidinone family that acts as a strong telomerase inhibitor and displays potent antibacterial and antitumor properties. These compounds share a hemiaminal-containing pyrrolizidinone core fused with a gamma-lactone, giving a furopyrrolizidine that is connected to a decalin fragment. The polyketide synthase module (PKS) of the PKS-NRPS ucsA is responsible for the synthesis of the polyketide backbone via the condensation of an acetyl-CoA starter unit with 6 malonyl-CoA units. The downstream nonribosomal peptide synthetase (NRPS) module then amidates the carboxyl end of the polyketide with a 2S,3S-methylproline derived from L-isoleucine by the 2-oxoglutarate-dependent dioxygenase ucsF which converts L-isoleucine to (4S,5S)-4-methylpyrroline-5-carboxylate that is further converted to 2S,3S-methylproline by the pyrroline-5-carboxylate reductase ucsG. Reductive release of the completed aminoacyl polyketide from the assembly line can form the 3-pyrrolin-2-one structure via an intramolecular Knoevenagel reaction. Because ucsA lacks a designated enoylreductase (ER) domain, the required activity is provided the enoyl reductase ucsL. This keto acyclic precursor is the substrate of the Diels-Alderase ucsH, that catalyzes the Diels-Alder cycloaddition. Oxidation of the 3S-methyl group to a carboxylate by the cytochrome P450 monooxygenase ucsK allows an oxa-Michael cyclization that might involve the reductase/dehydrogenase ucsI and which furnishes the furopyrrolizidine. The oxidase ucsJ likely plays a critical role in stereoselective reduction of the C5-C6 double bond to afford the required R-configured carboxylate group. Further enolization and oxidation at C5 by an unidentified enzyme affords the last intermediate that can undergo oxa-Michael cyclization to yield UCS1025A. The sequence is that of 2-oxoglutarate-dependent dioxygenase ucsF from Acremonium sp.